Reading from the N-terminus, the 277-residue chain is NLP effector protein Pc109174 (277 aa).

The N-terminal stretch at 1–19 (MNLVPALVLLLALAQTVLG) is a signal peptide. Positions 119 to 125 (KSRHLWA) match the Hepta-peptide GHRHDWE motif motif. N-linked (GlcNAc...) asparagine glycosylation is present at Asn-199.

Belongs to the Necrosis inducing protein (NPP1) family.

The protein localises to the secreted. Secreted effector that contributes strongly to virulence during infection by P.capsici. Induces cell death in the Solanaceae, including hot pepper. The protein is NLP effector protein Pc109174 of Phytophthora capsici.